The primary structure comprises 450 residues: UPF0210 protein CPF_1748 (450 aa).

Belongs to the UPF0210 family. In terms of assembly, homodimer.

This is UPF0210 protein CPF_1748 from Clostridium perfringens (strain ATCC 13124 / DSM 756 / JCM 1290 / NCIMB 6125 / NCTC 8237 / Type A).